The following is a 340-amino-acid chain: MNPFHASCWNTSAELLNKSWNKEFAYQTASVVDTVILPSMIGIICSTGLVGNILIVFTIIRSRKKTVPDIYICNLAVADLVHIVGMPFLIHQWARGGEWVFGGPLCTIITSLDTCNQFACSAIMTVMSVDRYFALVQPFRLTRWRTRYKTIRINLGLWAASFILALPVWVYSKVIKFKDGVESCAFDLTSPDDVLWYTLYLTITTFFFPLPLILVCYILILCYTWEMYQQNKDARCCNPSVPKQRVMKLTKMVLVLVVVFILSAAPYHVIQLVNLQMEQPTLAFYVGYYLSICLSYASSSINPFLYILLSGNFQKRLPQIQRRATEKEINNMGNTLKSHF.

The Extracellular segment spans residues 1–39 (MNPFHASCWNTSAELLNKSWNKEFAYQTASVVDTVILPS). N-linked (GlcNAc...) asparagine glycosylation is found at N10 and N17. Residues 40–60 (MIGIICSTGLVGNILIVFTII) traverse the membrane as a helical segment. The Cytoplasmic segment spans residues 61-69 (RSRKKTVPD). The helical transmembrane segment at 70 to 90 (IYICNLAVADLVHIVGMPFLI) threads the bilayer. At 91–104 (HQWARGGEWVFGGP) the chain is on the extracellular side. The helical transmembrane segment at 105–129 (LCTIITSLDTCNQFACSAIMTVMSV) threads the bilayer. Residues 130-154 (DRYFALVQPFRLTRWRTRYKTIRIN) lie on the Cytoplasmic side of the membrane. The chain crosses the membrane as a helical span at residues 155-175 (LGLWAASFILALPVWVYSKVI). Residues 176 to 200 (KFKDGVESCAFDLTSPDDVLWYTLY) lie on the Extracellular side of the membrane. A helical transmembrane segment spans residues 201–221 (LTITTFFFPLPLILVCYILIL). Over 222–252 (CYTWEMYQQNKDARCCNPSVPKQRVMKLTKM) the chain is Cytoplasmic. Residues 253 to 273 (VLVLVVVFILSAAPYHVIQLV) traverse the membrane as a helical segment. Over 274 to 288 (NLQMEQPTLAFYVGY) the chain is Extracellular. Residues 289–309 (YLSICLSYASSSINPFLYILL) traverse the membrane as a helical segment. The Cytoplasmic segment spans residues 310 to 340 (SGNFQKRLPQIQRRATEKEINNMGNTLKSHF).

This sequence belongs to the G-protein coupled receptor 1 family. Specifically expressed in the brain, with highest levels in cerebral cortex, hippocampus and amygdala. No expression detected in the cerebellum, thalamus or hypothalamus.

It localises to the cell membrane. Functionally, receptor for melanin-concentrating hormone, coupled to G proteins that activate phosphoinositide hydrolysis. The sequence is that of Melanin-concentrating hormone receptor 2 (MCHR2) from Homo sapiens (Human).